The primary structure comprises 364 residues: Probable dual-specificity RNA methyltransferase RlmN (364 aa).

Glu106 acts as the Proton acceptor in catalysis. The Radical SAM core domain maps to 112-351; that stretch reads YPHRNTVCIS…CTVRDTRGRE (240 aa). Residues Cys119 and Cys356 are joined by a disulfide bond. Residues Cys126, Cys130, and Cys133 each coordinate [4Fe-4S] cluster. S-adenosyl-L-methionine is bound by residues 177–178, Ser211, 234–236, and Asn313; these read GE and SLH. Cys356 (S-methylcysteine intermediate) is an active-site residue.

This sequence belongs to the radical SAM superfamily. RlmN family. The cofactor is [4Fe-4S] cluster.

The protein localises to the cytoplasm. It carries out the reaction adenosine(2503) in 23S rRNA + 2 reduced [2Fe-2S]-[ferredoxin] + 2 S-adenosyl-L-methionine = 2-methyladenosine(2503) in 23S rRNA + 5'-deoxyadenosine + L-methionine + 2 oxidized [2Fe-2S]-[ferredoxin] + S-adenosyl-L-homocysteine. The enzyme catalyses adenosine(37) in tRNA + 2 reduced [2Fe-2S]-[ferredoxin] + 2 S-adenosyl-L-methionine = 2-methyladenosine(37) in tRNA + 5'-deoxyadenosine + L-methionine + 2 oxidized [2Fe-2S]-[ferredoxin] + S-adenosyl-L-homocysteine. Specifically methylates position 2 of adenine 2503 in 23S rRNA and position 2 of adenine 37 in tRNAs. This is Probable dual-specificity RNA methyltransferase RlmN from Mycolicibacterium paratuberculosis (strain ATCC BAA-968 / K-10) (Mycobacterium paratuberculosis).